Consider the following 901-residue polypeptide: Quinate repressor protein (901 aa).

Positions 1–88 (MSILVRPPKR…DSLQTRRKFP (88 aa)) are sufficient for repression. 2 disordered regions span residues 26-59 (LRDF…DGSR) and 878-901 (EEQG…GQPM). Positions 31–43 (QGNSASTPINTSA) are enriched in polar residues.

The protein in the N-terminal section; belongs to the shikimate kinase family. It in the 2nd section; belongs to the type-I 3-dehydroquinase family. In the C-terminal section; belongs to the shikimate dehydrogenase family. In terms of assembly, interacts with qutA; transcriptional activator of the quinate utilization pathway genes.

In terms of biological role, multi-domain repressor protein that negatively regulates transcription of the quinate utilization pathway genes. May mediate its repressor activity by binding directly to the qutA activator protein. The chain is Quinate repressor protein (qutR) from Emericella nidulans (strain FGSC A4 / ATCC 38163 / CBS 112.46 / NRRL 194 / M139) (Aspergillus nidulans).